The primary structure comprises 427 residues: MSTSFENKATNRGIITFTISQDEIKPALDQAFNKVKKDLNVPGFRKGHMPRTVFNQKFGEEALYENALNLVLPKAYEAAVAELGLDVVAQPKIDVVSMEKGQDWKLTAEVVTKPEVKLGDYKDLSVEVDASKEVSDEEVDAKVERERNNLAELTVKDGEAAQGDTVVIDFVGSVDGVEFDGGKGDNFSLELGSGQFIPGFEEQLVGSKAGQTVDVNVTFPEDYQAEDLAGKDAKFVTTIHEVKTKEVPALDDELAKDIDDEVETLDELKAKYRKELESAKEIAFDDAVEGAAIELAVANAEIVELPEEMVHDEVHRAMNEFMGNMQRQGISPEMYFQLTGTTEEDLHKQYQADADKRVKTNLVIEAIAAAEGFEATDEEIEKEITDLASEYNMEADQVRGLLSADMLKHDIAMKKAVDVITSSATVK.

The region spanning 163 to 248 (GDTVVIDFVG…IHEVKTKEVP (86 aa)) is the PPIase FKBP-type domain.

The protein belongs to the FKBP-type PPIase family. Tig subfamily.

Its subcellular location is the cytoplasm. The catalysed reaction is [protein]-peptidylproline (omega=180) = [protein]-peptidylproline (omega=0). In terms of biological role, involved in protein export. Acts as a chaperone by maintaining the newly synthesized protein in an open conformation. Functions as a peptidyl-prolyl cis-trans isomerase. This is Trigger factor from Streptococcus agalactiae serotype V (strain ATCC BAA-611 / 2603 V/R).